We begin with the raw amino-acid sequence, 86 residues long: Putative membrane protein insertion efficiency factor (86 aa).

A disordered region spans residues 66 to 86 (AGGHDPVPPVPPQRYPSAQEH).

It belongs to the UPF0161 family.

The protein localises to the cell inner membrane. Its function is as follows. Could be involved in insertion of integral membrane proteins into the membrane. The chain is Putative membrane protein insertion efficiency factor from Nitratidesulfovibrio vulgaris (strain ATCC 29579 / DSM 644 / CCUG 34227 / NCIMB 8303 / VKM B-1760 / Hildenborough) (Desulfovibrio vulgaris).